A 252-amino-acid chain; its full sequence is Imidazole glycerol phosphate synthase subunit HisF (252 aa).

Residues aspartate 11 and aspartate 130 contribute to the active site.

This sequence belongs to the HisA/HisF family. Heterodimer of HisH and HisF.

The protein localises to the cytoplasm. The enzyme catalyses 5-[(5-phospho-1-deoxy-D-ribulos-1-ylimino)methylamino]-1-(5-phospho-beta-D-ribosyl)imidazole-4-carboxamide + L-glutamine = D-erythro-1-(imidazol-4-yl)glycerol 3-phosphate + 5-amino-1-(5-phospho-beta-D-ribosyl)imidazole-4-carboxamide + L-glutamate + H(+). The protein operates within amino-acid biosynthesis; L-histidine biosynthesis; L-histidine from 5-phospho-alpha-D-ribose 1-diphosphate: step 5/9. Functionally, IGPS catalyzes the conversion of PRFAR and glutamine to IGP, AICAR and glutamate. The HisF subunit catalyzes the cyclization activity that produces IGP and AICAR from PRFAR using the ammonia provided by the HisH subunit. This is Imidazole glycerol phosphate synthase subunit HisF from Polynucleobacter necessarius subsp. necessarius (strain STIR1).